The chain runs to 340 residues: Beta-D-galactofuranosidase xynD (340 aa).

The N-terminal stretch at 1–24 is a signal peptide; sequence MKHHNYYPSTCLSILPFLLPLTMS. The active-site Proton acceptor is Asp-51. N-linked (GlcNAc...) asparagine glycosylation is found at Asn-96 and Asn-165. The active-site Proton donor is the Glu-222. Asn-302 and Asn-328 each carry an N-linked (GlcNAc...) asparagine glycan.

It belongs to the glycosyl hydrolase 43 family.

Its subcellular location is the secreted. The protein operates within glycan degradation. In terms of biological role, glycoside hydrolase family 43 beta-D-galactofuranosidase involved in the degradation of beta-galactofuranoside (Galf)-containing glycans such as galactomannan or O-glycans. Is not active on beta-1,5- or beta-1,6-linked beta-D-galactofuranose (Galf) residues. This chain is Beta-D-galactofuranosidase xynD, found in Aspergillus niger (strain ATCC MYA-4892 / CBS 513.88 / FGSC A1513).